The primary structure comprises 793 residues: Phenylalanine--tRNA ligase beta subunit (793 aa).

The tRNA-binding domain maps to 39–148; sequence AAPFKGVKAA…EGDFPGVDLH (110 aa). The region spanning 401-476 is the B5 domain; that stretch reads PPQATIILRK…RLYGYDRLPS (76 aa). Residues D454, D460, E463, and E464 each contribute to the Mg(2+) site. Residues 699 to 792 form the FDX-ACB domain; that stretch reads SKFPAIRRDI…LVTELGAIIR (94 aa).

It belongs to the phenylalanyl-tRNA synthetase beta subunit family. Type 1 subfamily. As to quaternary structure, tetramer of two alpha and two beta subunits. Mg(2+) serves as cofactor.

The protein resides in the cytoplasm. It catalyses the reaction tRNA(Phe) + L-phenylalanine + ATP = L-phenylalanyl-tRNA(Phe) + AMP + diphosphate + H(+). The protein is Phenylalanine--tRNA ligase beta subunit of Nitrosococcus oceani (strain ATCC 19707 / BCRC 17464 / JCM 30415 / NCIMB 11848 / C-107).